We begin with the raw amino-acid sequence, 137 residues long: Proofreading thioesterase EntH (137 aa).

E63 functions as the Nucleophile or proton acceptor in the catalytic mechanism.

Belongs to the thioesterase PaaI family. As to quaternary structure, homotetramer. Dimer of dimers. Interacts specifically with the aryl carrier protein (ArCP) domain of EntB.

Its subcellular location is the cytoplasm. Its pathway is siderophore biosynthesis; enterobactin biosynthesis. Required for optimal enterobactin synthesis. Acts as a proofreading enzyme that prevents EntB misacylation by hydrolyzing the thioester bound existing between EntB and wrongly charged molecules. In Shigella sonnei (strain Ss046), this protein is Proofreading thioesterase EntH.